We begin with the raw amino-acid sequence, 330 residues long: Glycerol-3-phosphate dehydrogenase [NAD(P)+] (330 aa).

Positions 11, 12, 32, and 106 each coordinate NADPH. Sn-glycerol 3-phosphate contacts are provided by K106, G133, and S135. Residue A137 participates in NADPH binding. The sn-glycerol 3-phosphate site is built by K188, D241, S251, R252, and N253. The active-site Proton acceptor is K188. Residue R252 participates in NADPH binding. NADPH contacts are provided by V276 and E278.

It belongs to the NAD-dependent glycerol-3-phosphate dehydrogenase family.

It localises to the cytoplasm. The catalysed reaction is sn-glycerol 3-phosphate + NAD(+) = dihydroxyacetone phosphate + NADH + H(+). The enzyme catalyses sn-glycerol 3-phosphate + NADP(+) = dihydroxyacetone phosphate + NADPH + H(+). It participates in membrane lipid metabolism; glycerophospholipid metabolism. Functionally, catalyzes the reduction of the glycolytic intermediate dihydroxyacetone phosphate (DHAP) to sn-glycerol 3-phosphate (G3P), the key precursor for phospholipid synthesis. This is Glycerol-3-phosphate dehydrogenase [NAD(P)+] from Clostridium botulinum (strain Eklund 17B / Type B).